The chain runs to 132 residues: Small ribosomal subunit protein uS8c (132 aa).

The protein belongs to the universal ribosomal protein uS8 family. Part of the 30S ribosomal subunit.

It is found in the plastid. Its subcellular location is the cyanelle. One of the primary rRNA binding proteins, it binds directly to 16S rRNA central domain where it helps coordinate assembly of the platform of the 30S subunit. In Cyanophora paradoxa, this protein is Small ribosomal subunit protein uS8c (rps8).